Here is a 330-residue protein sequence, read N- to C-terminus: DNA-directed RNA polymerase subunit alpha (330 aa).

Residues M1–S229 form an alpha N-terminal domain (alpha-NTD) region. Residues A245–H330 form an alpha C-terminal domain (alpha-CTD) region.

This sequence belongs to the RNA polymerase alpha chain family. Homodimer. The RNAP catalytic core consists of 2 alpha, 1 beta, 1 beta' and 1 omega subunit. When a sigma factor is associated with the core the holoenzyme is formed, which can initiate transcription.

The catalysed reaction is RNA(n) + a ribonucleoside 5'-triphosphate = RNA(n+1) + diphosphate. Functionally, DNA-dependent RNA polymerase catalyzes the transcription of DNA into RNA using the four ribonucleoside triphosphates as substrates. The protein is DNA-directed RNA polymerase subunit alpha of Aster yellows witches'-broom phytoplasma (strain AYWB).